The sequence spans 107 residues: UPF0060 membrane protein ZMO1566 (107 aa).

Transmembrane regions (helical) follow at residues leucine 4–isoleucine 24, serine 29–phenylalanine 49, alanine 55–tryptophan 75, and histidine 84–proline 104.

It belongs to the UPF0060 family.

It is found in the cell inner membrane. The chain is UPF0060 membrane protein ZMO1566 from Zymomonas mobilis subsp. mobilis (strain ATCC 31821 / ZM4 / CP4).